We begin with the raw amino-acid sequence, 95 residues long: MPKLEMMLLVLLILPLPYFDAAGGQSVHVDGYGDGLARYLQRGERAVKKTCIRSTPGSNWGRCCLTKMCHTLCCARSDCTCVYRSGKGHGCSCTS.

An N-terminal signal peptide occupies residues 1-24 (MPKLEMMLLVLLILPLPYFDAAGG). A propeptide spanning residues 25-45 (QSVHVDGYGDGLARYLQRGER) is cleaved from the precursor. The residue at position 56 (P56) is a 4-hydroxyproline. Cystine bridges form between C64-C73, C69-C81, C74-C91, and C79-C93.

It belongs to the conotoxin D superfamily. In terms of assembly, homodimer; disulfide-linked. The homodimer contains 10 disulfide bonds. As to expression, expressed by the venom duct.

It localises to the secreted. Its function is as follows. Alpha-conotoxins act on postsynaptic membranes, they bind to the nicotinic acetylcholine receptors (nAChR) and thus inhibit them. Through its two C-terminal domains, this homodimeric protein would bind to two nAChR allosteric sites, located outside the nAChR C-loop of the principal binding face and at the adjacent binding interface in a clockwise direction. This toxin slowly and reversibly inhibits the ACh-induced response of the human alpha-7/CHRNA7 nAChR subtype (IC(50)=6.2 uM). The sequence is that of Alpha-conotoxin PiXXA from Conus princeps (Prince cone).